Here is a 148-residue protein sequence, read N- to C-terminus: Cytochrome c-552 (148 aa).

The N-terminal stretch at Met1–Ala17 is a signal peptide. Position 18 is a pyrrolidone carboxylic acid (Gln18). 4 residues coordinate heme c: Cys28, Cys31, His32, and Met86.

In terms of processing, binds 1 heme c group covalently per subunit.

In terms of biological role, this monoheme basic protein appears to function as an electron donor to cytochrome oxidase in T.thermophilus. The chain is Cytochrome c-552 (cycA) from Thermus thermophilus (strain ATCC 27634 / DSM 579 / HB8).